A 1381-amino-acid polypeptide reads, in one-letter code: DNA-directed RNA polymerase subunit beta'' (1381 aa).

4 residues coordinate Zn(2+): Cys-224, Cys-295, Cys-302, and Cys-305.

It belongs to the RNA polymerase beta' chain family. RpoC2 subfamily. As to quaternary structure, in plastids the minimal PEP RNA polymerase catalytic core is composed of four subunits: alpha, beta, beta', and beta''. When a (nuclear-encoded) sigma factor is associated with the core the holoenzyme is formed, which can initiate transcription. The cofactor is Zn(2+).

It localises to the plastid. It is found in the chloroplast. It catalyses the reaction RNA(n) + a ribonucleoside 5'-triphosphate = RNA(n+1) + diphosphate. Functionally, DNA-dependent RNA polymerase catalyzes the transcription of DNA into RNA using the four ribonucleoside triphosphates as substrates. The polypeptide is DNA-directed RNA polymerase subunit beta'' (Lactuca sativa (Garden lettuce)).